The chain runs to 608 residues: Serine/threonine-protein kinase BUR1 (608 aa).

The Protein kinase domain occupies 39–346 (YEIIQKLGQG…ALDALNHNYF (308 aa)). Residues 45–53 (LGQGTFGVV) and K68 contribute to the ATP site. D174 serves as the catalytic Proton acceptor. 2 disordered regions span residues 383–419 (HEAN…LALP) and 443–571 (YIPK…FDED). A compositionally biased stretch (low complexity) spans 400-411 (YNNSNNYPRNRN). Residues 471 to 482 (LRDRSPRREGHI) show a composition bias toward basic and acidic residues. The segment covering 487-502 (STTNSNNISSNSSASN) has biased composition (low complexity). Composition is skewed to polar residues over residues 503-512 (VGGTLSNPTH) and 539-548 (PQSSSRNVSD). Over residues 559-571 (EQNESDLTDFDED) the composition is skewed to acidic residues.

The protein belongs to the protein kinase superfamily. CMGC Ser/Thr protein kinase family. CDC2/CDKX subfamily.

It is found in the nucleus. It carries out the reaction L-seryl-[protein] + ATP = O-phospho-L-seryl-[protein] + ADP + H(+). The catalysed reaction is L-threonyl-[protein] + ATP = O-phospho-L-threonyl-[protein] + ADP + H(+). The enzyme catalyses [DNA-directed RNA polymerase] + ATP = phospho-[DNA-directed RNA polymerase] + ADP + H(+). In terms of biological role, serine/threonine-protein kinase involved in transcription regulation. Phosphorylates the UBC2/RAD6 ubiquitin-conjugating enzyme (E2), leading to monoubiquitination of histone H2B and the silencing of telomeric-associated genes. Also required for histone H3 methylation. Necessary for the recovery from pheromone-induced growth arrest in the cell cycle G1 phase. The polypeptide is Serine/threonine-protein kinase BUR1 (BUR1) (Debaryomyces hansenii (strain ATCC 36239 / CBS 767 / BCRC 21394 / JCM 1990 / NBRC 0083 / IGC 2968) (Yeast)).